A 378-amino-acid chain; its full sequence is UDP-N-acetylenolpyruvoylglucosamine reductase (378 aa).

Positions 15 to 185 (VGGTPERLLE…LSVDLELADH (171 aa)) constitute an FAD-binding PCMH-type domain. Arginine 163 is an active-site residue. The active-site Proton donor is the serine 248. Glutamate 370 is an active-site residue.

It belongs to the MurB family. The cofactor is FAD.

The protein resides in the cytoplasm. It carries out the reaction UDP-N-acetyl-alpha-D-muramate + NADP(+) = UDP-N-acetyl-3-O-(1-carboxyvinyl)-alpha-D-glucosamine + NADPH + H(+). It participates in cell wall biogenesis; peptidoglycan biosynthesis. Its function is as follows. Cell wall formation. This Leifsonia xyli subsp. xyli (strain CTCB07) protein is UDP-N-acetylenolpyruvoylglucosamine reductase.